A 95-amino-acid chain; its full sequence is Aspartyl/glutamyl-tRNA(Asn/Gln) amidotransferase subunit C (95 aa).

This sequence belongs to the GatC family. Heterotrimer of A, B and C subunits.

It carries out the reaction L-glutamyl-tRNA(Gln) + L-glutamine + ATP + H2O = L-glutaminyl-tRNA(Gln) + L-glutamate + ADP + phosphate + H(+). It catalyses the reaction L-aspartyl-tRNA(Asn) + L-glutamine + ATP + H2O = L-asparaginyl-tRNA(Asn) + L-glutamate + ADP + phosphate + 2 H(+). Allows the formation of correctly charged Asn-tRNA(Asn) or Gln-tRNA(Gln) through the transamidation of misacylated Asp-tRNA(Asn) or Glu-tRNA(Gln) in organisms which lack either or both of asparaginyl-tRNA or glutaminyl-tRNA synthetases. The reaction takes place in the presence of glutamine and ATP through an activated phospho-Asp-tRNA(Asn) or phospho-Glu-tRNA(Gln). In Geobacter metallireducens (strain ATCC 53774 / DSM 7210 / GS-15), this protein is Aspartyl/glutamyl-tRNA(Asn/Gln) amidotransferase subunit C.